An 878-amino-acid chain; its full sequence is Leucine--tRNA ligase (878 aa).

The short motif at proline 43 to histidine 53 is the 'HIGH' region element. The short motif at lysine 630–serine 634 is the 'KMSKS' region element. Lysine 633 serves as a coordination point for ATP.

The protein belongs to the class-I aminoacyl-tRNA synthetase family.

It localises to the cytoplasm. It carries out the reaction tRNA(Leu) + L-leucine + ATP = L-leucyl-tRNA(Leu) + AMP + diphosphate. The protein is Leucine--tRNA ligase of Rhodopseudomonas palustris (strain BisB5).